A 229-amino-acid polypeptide reads, in one-letter code: Cytidylate kinase (229 aa).

12-20 (GPSGSGKGT) serves as a coordination point for ATP.

It belongs to the cytidylate kinase family. Type 1 subfamily.

The protein resides in the cytoplasm. It catalyses the reaction CMP + ATP = CDP + ADP. The enzyme catalyses dCMP + ATP = dCDP + ADP. This Azotobacter vinelandii (strain DJ / ATCC BAA-1303) protein is Cytidylate kinase.